Consider the following 506-residue polypeptide: Histidine ammonia-lyase (506 aa).

The 5-imidazolinone (Ala-Gly) cross-link spans 143–145 (ASG). Ser-144 is modified (2,3-didehydroalanine (Ser)).

The protein belongs to the PAL/histidase family. Post-translationally, contains an active site 4-methylidene-imidazol-5-one (MIO), which is formed autocatalytically by cyclization and dehydration of residues Ala-Ser-Gly.

The protein resides in the cytoplasm. The catalysed reaction is L-histidine = trans-urocanate + NH4(+). The protein operates within amino-acid degradation; L-histidine degradation into L-glutamate; N-formimidoyl-L-glutamate from L-histidine: step 1/3. This chain is Histidine ammonia-lyase, found in Salmonella gallinarum (strain 287/91 / NCTC 13346).